We begin with the raw amino-acid sequence, 424 residues long: Formyl-CoA:oxalate CoA-transferase (424 aa).

CoA contacts are provided by residues 17 to 18, Arg38, 96 to 98, Arg104, and 136 to 139; these read QS, NFA, and KVYE. Asp168 (nucleophile) is an active-site residue. 247–249 lines the substrate pocket; sequence GGQ.

This sequence belongs to the CoA-transferase III family. Frc subfamily. Homodimer.

It carries out the reaction formyl-CoA + oxalate = oxalyl-CoA + formate. It functions in the pathway metabolic intermediate degradation; oxalate degradation; CO(2) and formate from oxalate: step 1/2. Functionally, involved in the catabolism of oxalate and in the adapatation to low pH via the induction of the oxalate-dependent acid tolerance response (ATR). Catalyzes the transfer of the CoA moiety from formyl-CoA to oxalate. In Afipia carboxidovorans (strain ATCC 49405 / DSM 1227 / KCTC 32145 / OM5) (Oligotropha carboxidovorans), this protein is Formyl-CoA:oxalate CoA-transferase.